The following is a 706-amino-acid chain: Transcription factor 12 (706 aa).

A disordered region spans residues 25–109; sequence AMFSPPVNSG…TPFMNSNLIG (85 aa). 2 stretches are compositionally biased toward polar residues: residues 30-48 and 56-76; these read PVNS…QFSG and GTTS…SRGF. S47, S67, and S79 each carry phosphoserine. The span at 81–93 shows a compositional bias: basic and acidic residues; sequence HYSDHLNDSRLGT. S98 bears the Phosphoserine mark. A Glycyl lysine isopeptide (Lys-Gly) (interchain with G-Cter in SUMO2) cross-link involves residue K110. S116 and S124 each carry phosphoserine. The leucine-zipper stretch occupies residues 119-140; sequence LYSRDSGLSGCQSSLLRQDLGL. Disordered regions lie at residues 140–222 and 249–313; these read LGSP…SMFA and FGGI…ASHT. The span at 144-163 shows a compositional bias: polar residues; sequence AQLSSSGKPGTPYYSFSATS. K181 participates in a covalent cross-link: Glycyl lysine isopeptide (Lys-Gly) (interchain with G-Cter in SUMO2). The Nuclear localization signal signature appears at 181-188; it reads KKVRKVPP. Over residues 256–269 the composition is skewed to low complexity; sequence STSHMSQSSSYGSL. The segment covering 282-306 has biased composition (polar residues); the sequence is VSPTDINTSLPPMSSFHRGSTSSSP. Residue T313 is modified to Phosphothreonine. S333 carries the phosphoserine modification. Disordered regions lie at residues 349–392 and 520–604; these read PDHT…YENS and HKTP…ERRM. Positions 352–363 are enriched in low complexity; that stretch reads TSSSFPSNPSTP. 2 stretches are compositionally biased toward polar residues: residues 364 to 376 and 383 to 392; these read VGSP…TSQW and APSSPSYENS. S392 is subject to Phosphoserine. 2 stretches are compositionally biased toward basic and acidic residues: residues 542–554 and 560–575; these read IKTE…ENLH and DDMK…DIKV. Residue K543 forms a Glycyl lysine isopeptide (Lys-Gly) (interchain with G-Cter in SUMO2) linkage. Residue S564 is modified to Phosphoserine. Residue K574 forms a Glycyl lysine isopeptide (Lys-Gly) (interchain with G-Cter in SUMO2) linkage. T581 is modified (phosphothreonine). S582 and S583 each carry phosphoserine. Residues 592-604 show a composition bias toward basic and acidic residues; the sequence is PEQKIEREKERRM. The region spanning 601-654 is the bHLH domain; it reads ERRMANNARERLRVRDINEAFKELGRMCQLHLKSEKPQTKLLILHQAVAVILSL. Glycyl lysine isopeptide (Lys-Gly) (interchain with G-Cter in SUMO2) cross-links involve residues K633 and K677. Residues 656–679 form a class A specific domain region; it reads QQVRERNLNPKAACLKRREEEKVS. Residues 674–706 form a disordered region; it reads EEEKVSAASAEPPNTLPGAHPGLSESTNPMGHL. Positions 697 to 706 are enriched in polar residues; it reads SESTNPMGHL.

As to quaternary structure, efficient DNA binding requires dimerization with another bHLH protein. Forms homo- or heterooligomers with myogenin, E12 and ITF2 proteins and RUNX1T1. Interacts with PTF1A. Interacts with NEUROD2. Interacts with BHLHA9. Widely expressed.

The protein resides in the nucleus. Functionally, transcriptional regulator. Involved in the initiation of neuronal differentiation. Activates transcription by binding to the E box (5'-CANNTG-3'). May be involved in the functional network that regulates the development of the GnRH axis. In Mus musculus (Mouse), this protein is Transcription factor 12 (Tcf12).